Here is a 222-residue protein sequence, read N- to C-terminus: Pectate lyase A (222 aa).

The N-terminal stretch at 1–25 (MKKMLTLLLSAGLVASIFGVMPAAA) is a signal peptide.

It belongs to the polysaccharide lyase 3 family. Ca(2+) is required as a cofactor.

The protein resides in the secreted. The catalysed reaction is Eliminative cleavage of (1-&gt;4)-alpha-D-galacturonan to give oligosaccharides with 4-deoxy-alpha-D-galact-4-enuronosyl groups at their non-reducing ends.. It carries out the reaction Eliminative cleavage of (1-&gt;4)-alpha-D-galacturonan methyl ester to give oligosaccharides with 4-deoxy-6-O-methyl-alpha-D-galact-4-enuronosyl groups at their non-reducing ends.. Its pathway is glycan metabolism; pectin degradation; 2-dehydro-3-deoxy-D-gluconate from pectin: step 2/5. With respect to regulation, strongly inhibited by Ba(2+). To a lesser extent, is also inhibited by Sn(2+), Mg(2+) and Ag(+). Inhibited by EDTA in vitro. Functionally, catalyzes the depolymerization of both polygalacturonate and pectins of methyl esterification degree from 22 to 89%, with an endo mode of action. In contrast to the majority of pectate lyases, displays high activity on highly methylated pectins. Is not able to cleave trigalacturonate. Does not degrade xylans and carboxymethylcellulose (CMC). This is Pectate lyase A (pelA) from Paenibacillus barcinonensis.